The following is a 435-amino-acid chain: Probable exopolygalacturonase X (435 aa).

The signal sequence occupies residues 1-22 (MRLTHVLSHTLGLLALGATAEA). The interval 31-55 (CSPKKPFRPLPTSSSRDKTCHVRSH) is disordered. Residues 45-55 (SRDKTCHVRSH) are compositionally biased toward basic and acidic residues. N-linked (GlcNAc...) asparagine glycans are attached at residues Asn93, Asn112, Asn128, and Asn198. PbH1 repeat units lie at residues 199 to 229 (SSNVLFDGIDISGYSKSDNEAKNTDGWDTYR) and 230 to 251 (SNNIVIQNSVINNGDDCVSFKP). Asp244 (proton donor) is an active-site residue. Residues Cys246 and Cys263 are joined by a disulfide bond. N-linked (GlcNAc...) asparagine glycans are attached at residues Asn252 and Asn264. Residues 253-273 (STNILVQNLHCNGSHGISVGS) form a PbH1 3 repeat. Residue His267 is part of the active site. N-linked (GlcNAc...) asparagine glycosylation is found at Asn291, Asn296, Asn328, and Asn353. Residues 326-347 (VKNITYDTALIDNVDWAIEITQ) form a PbH1 4 repeat. A PbH1 5 repeat occupies 361 to 409 (PSSLTISDVHIKNFRGTTSGSEDPYVGTIVCSSPDTCSDIYTSNINVTS). Cys391 and Cys397 form a disulfide bridge. N-linked (GlcNAc...) asparagine glycosylation is found at Asn406 and Asn429.

It belongs to the glycosyl hydrolase 28 family.

The protein localises to the secreted. The catalysed reaction is [(1-&gt;4)-alpha-D-galacturonosyl](n) + H2O = alpha-D-galacturonate + [(1-&gt;4)-alpha-D-galacturonosyl](n-1). Specific in hydrolyzing the terminal glycosidic bond of polygalacturonic acid and oligogalacturonates. This chain is Probable exopolygalacturonase X (pgaX), found in Aspergillus niger (strain ATCC MYA-4892 / CBS 513.88 / FGSC A1513).